The chain runs to 441 residues: Interferon-related developmental regulator 2 (441 aa).

Positions 1–15 (MPRARKGNALRKGGQ) are enriched in basic residues. A disordered region spans residues 1–51 (MPRARKGNALRKGGQRRGGGARSSTQADSGSSEDEAASEARSTTSDCPSLL).

This sequence belongs to the IFRD family. Associates with ribosomes; promoting ribosome inactivation.

In terms of biological role, ribosome-binding protein that acts as an inhibitor of mRNA translation by promoting ribosome inactivation. Associates with the P- and E-sites of the ribosome and inserts a C-terminal helix into the mRNA exit channel to preclude translation. In Mus musculus (Mouse), this protein is Interferon-related developmental regulator 2.